The sequence spans 325 residues: MTENFWRELPRPFFVLAPMEDVTDVVFRHVVSEAGRPDVFFTEFTNSESYCHPDGKDSVRGRLTFTEDEQPIVAHIWGDKPENFRKMSIGMAELGFKGLDINMGCPVPNVAGNGKGSGLICRPAVAAELIQAAKAGGLPVSVKTRLGYTDVDEWREWLTHILKQDIANLSIHLRTRAEMSKVDAHWELIPEIKKLRDEVAPDTLLTINGDIPDRQTGLKLAEQYGVDGIMIGRGIFTNPFAFEKEPKEHSSKELLDLLRLHLDLHDEYSKEEARPYKPLPRFFKIYLRGFRGASELRNQCMNTKSTDEVRALLDDFERKYLDGIE.

18-20 (PME) contributes to the FMN binding site. Cys105 serves as the catalytic Proton donor. Residues Lys143, 208-210 (NGD), and 232-233 (GR) contribute to the FMN site.

It belongs to the Dus family. The cofactor is FMN.

The catalysed reaction is a 5,6-dihydrouridine in tRNA + NAD(+) = a uridine in tRNA + NADH + H(+). It carries out the reaction a 5,6-dihydrouridine in tRNA + NADP(+) = a uridine in tRNA + NADPH + H(+). Functionally, catalyzes the synthesis of 5,6-dihydrouridine (D), a modified base found in the D-loop of most tRNAs, via the reduction of the C5-C6 double bond in target uridines. The polypeptide is Probable tRNA-dihydrouridine synthase 2 (dus2) (Bacillus subtilis (strain 168)).